We begin with the raw amino-acid sequence, 86 residues long: Large ribosomal subunit protein bL27 (86 aa).

It belongs to the bacterial ribosomal protein bL27 family.

The polypeptide is Large ribosomal subunit protein bL27 (Xanthomonas axonopodis pv. citri (strain 306)).